We begin with the raw amino-acid sequence, 1202 residues long: Adenine-specific methyltransferase PglX (1202 aa).

The protein belongs to the methyltransferase superfamily. PglX adenine methyltransferase family.

It catalyses the reaction a 2'-deoxyadenosine in DNA + S-adenosyl-L-methionine = an N(6)-methyl-2'-deoxyadenosine in DNA + S-adenosyl-L-homocysteine + H(+). Functionally, BREX systems (bacteriophage exclusion) provide immunity against bacteriophage. Part of a type 1 BREX system which protects against dsDNA phage. This system allows phage adsorption but prevents phage DNA replication, without degradation of the phage DNA. Methylation of bacterial DNA by this protein guides self/non-self discrimination. Probably methylates the adenine in the fifth position of the hexamer 5'-ACRCAG-3' in genomic DNA. N(6)-methylated adenine on the fifth position of 5'-ACRCAG-3' is found in the genome; there are 1906 sites in the genomic DNA. The polypeptide is Adenine-specific methyltransferase PglX (Lacticaseibacillus casei (strain Zhang) (Lactobacillus casei)).